The chain runs to 656 residues: Ribosome quality control complex subunit 1 (656 aa).

Residues 1-11 (MSSRALRKLQR) show a composition bias toward basic residues. Disordered stretches follow at residues 1–35 (MSSRALRKLQRQRQTELLEEALDSESDEDDEFSST), 51–122 (NNAI…LESS), and 634–656 (LFTSTNSETEPAEESTEEMGQGD). Residues 17 to 32 (LLEEALDSESDEDDEF) show a composition bias toward acidic residues. Residues 51–63 (NNAINSEAEKSVS) show a composition bias toward basic and acidic residues. Ser-56, Ser-61, and Ser-63 each carry phosphoserine. Residues 83-101 (KKAKNKKKKKKQQKKKKVT) show a composition bias toward basic residues. A compositionally biased stretch (basic and acidic residues) spans 102-122 (GKRDLDNQSSDNEKLEGLESS). Ser-110 and Ser-111 each carry phosphoserine.

It belongs to the TCF25 family. In terms of assembly, component of the ribosome quality control complex (RQC), composed of the E3 ubiquitin ligase rkr1/ltn1, rqc1 and mtr1/rqc2, as well as cdc48 and its ubiquitin-binding cofactors. RQC forms a stable complex with 60S ribosomal subunits.

The protein resides in the cytoplasm. Component of the ribosome quality control complex (RQC), a ribosome-associated complex that mediates ubiquitination and extraction of incompletely synthesized nascent chains for proteasomal degradation. Within the RQC complex, rqc1 is essential for the recruitment of cdc48 to incompletely synthesized nascent polypeptides that are ubiquitinated by rkr1/ltn1. This is Ribosome quality control complex subunit 1 from Schizosaccharomyces pombe (strain 972 / ATCC 24843) (Fission yeast).